A 362-amino-acid polypeptide reads, in one-letter code: 3-dehydroquinate synthase (362 aa).

NAD(+) is bound by residues 70–75, 104–108, 128–129, Lys-141, Lys-150, and 168–171; these read DGEKYK, GVIGD, TT, and TLNT. Positions 183, 246, and 263 each coordinate Zn(2+).

Belongs to the sugar phosphate cyclases superfamily. Dehydroquinate synthase family. It depends on NAD(+) as a cofactor. Requires Co(2+) as cofactor. Zn(2+) serves as cofactor.

Its subcellular location is the cytoplasm. The catalysed reaction is 7-phospho-2-dehydro-3-deoxy-D-arabino-heptonate = 3-dehydroquinate + phosphate. The protein operates within metabolic intermediate biosynthesis; chorismate biosynthesis; chorismate from D-erythrose 4-phosphate and phosphoenolpyruvate: step 2/7. Catalyzes the conversion of 3-deoxy-D-arabino-heptulosonate 7-phosphate (DAHP) to dehydroquinate (DHQ). In Haemophilus influenzae (strain ATCC 51907 / DSM 11121 / KW20 / Rd), this protein is 3-dehydroquinate synthase.